We begin with the raw amino-acid sequence, 469 residues long: 3-isopropylmalate dehydratase large subunit (469 aa).

3 residues coordinate [4Fe-4S] cluster: C349, C410, and C413.

Belongs to the aconitase/IPM isomerase family. LeuC type 1 subfamily. Heterodimer of LeuC and LeuD. Requires [4Fe-4S] cluster as cofactor.

It catalyses the reaction (2R,3S)-3-isopropylmalate = (2S)-2-isopropylmalate. Its pathway is amino-acid biosynthesis; L-leucine biosynthesis; L-leucine from 3-methyl-2-oxobutanoate: step 2/4. Functionally, catalyzes the isomerization between 2-isopropylmalate and 3-isopropylmalate, via the formation of 2-isopropylmaleate. The polypeptide is 3-isopropylmalate dehydratase large subunit (Neisseria meningitidis serogroup C (strain 053442)).